Here is a 252-residue protein sequence, read N- to C-terminus: Ribosomal RNA small subunit methyltransferase J (252 aa).

Residues 105 to 106 (RD), 121 to 122 (ER), and aspartate 175 contribute to the S-adenosyl-L-methionine site.

This sequence belongs to the methyltransferase superfamily. RsmJ family.

The protein resides in the cytoplasm. It carries out the reaction guanosine(1516) in 16S rRNA + S-adenosyl-L-methionine = N(2)-methylguanosine(1516) in 16S rRNA + S-adenosyl-L-homocysteine + H(+). Its function is as follows. Specifically methylates the guanosine in position 1516 of 16S rRNA. The sequence is that of Ribosomal RNA small subunit methyltransferase J from Pasteurella multocida (strain Pm70).